A 90-amino-acid polypeptide reads, in one-letter code: Probable Fe(2+)-trafficking protein (90 aa).

This sequence belongs to the Fe(2+)-trafficking protein family.

Its function is as follows. Could be a mediator in iron transactions between iron acquisition and iron-requiring processes, such as synthesis and/or repair of Fe-S clusters in biosynthetic enzymes. The protein is Probable Fe(2+)-trafficking protein of Thioalkalivibrio sulfidiphilus (strain HL-EbGR7).